A 564-amino-acid polypeptide reads, in one-letter code: MSYPADDYESEAAYDPYAYPSDYDMHTGDPKQDLAYERQYEQQTYQVIPEVIKNFIQYFHKTVSDLIDQKVYELQASRVSSDVIDQKVYEIQDIYENSWTKLTERFFKNTPWPEAEAIAPQVGNDAVFLILYKELYYRHIYAKVSGGPSLEQRFESYYNYCNLFNYILNADGPAPLELPNQWLWDIIDEFIYQFQSFSQYRCKTAKKSEEEIDFLRSNPKIWNVHSVLNVLHSLVDKSNINRQLEVYTSGGDPESVAGEYGRHSLYKMLGYFSLVGLLRLHSLLGDYYQAIKVLENIELNKKSMYSRVPECQVTTYYYVGFAYLTMRRYQDAIRVFANILLYIQRTKSMFQRTTYKYEMINKQNEQMHALLAIALTMYPMRIDESIHLQLREKYGDKMLRMQKGDPQVYEELFSYSCPKFLSPVVPNYDNVHPNYHKEPFLQQLKVFSDEVQQQAQLSTIRSFLKLYTTMPVAKLAGFLDLTEQEFRIQLLVFKHKMKNLVWTSGISALDGEFQSASEVDFYIDKDMIHIADTKVARRYGDFFIRQIHKFEELNRTLKKMGQRP.

N-acetylserine is present on serine 2. Serine 21 is subject to Phosphoserine. A PCI domain is found at 331–537 (DAIRVFANIL…IHIADTKVAR (207 aa)). Residues lysine 465 and lysine 549 each carry the N6-acetyllysine modification.

Belongs to the eIF-3 subunit L family. Component of the eukaryotic translation initiation factor 3 (eIF-3) complex, which is composed of 13 subunits: EIF3A, EIF3B, EIF3C, EIF3D, EIF3E, EIF3F, EIF3G, EIF3H, EIF3I, EIF3J, EIF3K, EIF3L and EIF3M. The eIF-3 complex appears to include 3 stable modules: module A is composed of EIF3A, EIF3B, EIF3G and EIF3I; module B is composed of EIF3F, EIF3H, and EIF3M; and module C is composed of EIF3C, EIF3D, EIF3E, EIF3K and EIF3L. EIF3C of module C binds EIF3B of module A and EIF3H of module B, thereby linking the three modules. EIF3J is a labile subunit that binds to the eIF-3 complex via EIF3B. The eIF-3 complex interacts with RPS6KB1 under conditions of nutrient depletion. Mitogenic stimulation leads to binding and activation of a complex composed of MTOR and RPTOR, leading to phosphorylation and release of RPS6KB1 and binding of EIF4B to eIF-3. Interacts with RRN3.

The protein localises to the cytoplasm. Functionally, component of the eukaryotic translation initiation factor 3 (eIF-3) complex, which is required for several steps in the initiation of protein synthesis. The eIF-3 complex associates with the 40S ribosome and facilitates the recruitment of eIF-1, eIF-1A, eIF-2:GTP:methionyl-tRNAi and eIF-5 to form the 43S pre-initiation complex (43S PIC). The eIF-3 complex stimulates mRNA recruitment to the 43S PIC and scanning of the mRNA for AUG recognition. The eIF-3 complex is also required for disassembly and recycling of post-termination ribosomal complexes and subsequently prevents premature joining of the 40S and 60S ribosomal subunits prior to initiation. The eIF-3 complex specifically targets and initiates translation of a subset of mRNAs involved in cell proliferation, including cell cycling, differentiation and apoptosis, and uses different modes of RNA stem-loop binding to exert either translational activation or repression. The polypeptide is Eukaryotic translation initiation factor 3 subunit L (Pan troglodytes (Chimpanzee)).